We begin with the raw amino-acid sequence, 861 residues long: DNA mismatch repair protein MutS (861 aa).

609–616 contributes to the ATP binding site; that stretch reads GPNMAGKS.

This sequence belongs to the DNA mismatch repair MutS family.

This protein is involved in the repair of mismatches in DNA. It is possible that it carries out the mismatch recognition step. This protein has a weak ATPase activity. This chain is DNA mismatch repair protein MutS, found in Borrelia hermsii (strain HS1 / DAH).